Reading from the N-terminus, the 234-residue chain is Ribose-5-phosphate isomerase A (234 aa).

Substrate-binding positions include 28–31 (TGST), 83–86 (DGAD), and 96–99 (KGGG). Residue glutamate 105 is the Proton acceptor of the active site. Lysine 123 is a substrate binding site.

The protein belongs to the ribose 5-phosphate isomerase family. In terms of assembly, homodimer.

It carries out the reaction aldehydo-D-ribose 5-phosphate = D-ribulose 5-phosphate. Its pathway is carbohydrate degradation; pentose phosphate pathway; D-ribose 5-phosphate from D-ribulose 5-phosphate (non-oxidative stage): step 1/1. Functionally, catalyzes the reversible conversion of ribose-5-phosphate to ribulose 5-phosphate. The chain is Ribose-5-phosphate isomerase A from Bartonella quintana (strain Toulouse) (Rochalimaea quintana).